The primary structure comprises 146 residues: U1 small nuclear ribonucleoprotein C (146 aa).

The segment at 4-36 (YYCDYCDTYLTHDSPSVRKTHCTGRKHRDNVKF) adopts a Matrin-type zinc-finger fold. The segment at 64 to 96 (NNPFAGGPSSAPPKPSGVSIPPPNMGAPPRPGM) is disordered. The span at 73 to 96 (SAPPKPSGVSIPPPNMGAPPRPGM) shows a compositional bias: pro residues.

This sequence belongs to the U1 small nuclear ribonucleoprotein C family. In terms of assembly, U1 snRNP is composed of the 7 core Sm proteins B/B', D1, D2, D3, E, F and G that assemble in a heptameric protein ring on the Sm site of the small nuclear RNA to form the core snRNP, and at least 3 U1 snRNP-specific proteins U1-70K, U1-A and U1-C. U1-C interacts with U1 snRNA and the 5' splice-site region of the pre-mRNA.

It is found in the nucleus. In terms of biological role, component of the spliceosomal U1 snRNP, which is essential for recognition of the pre-mRNA 5' splice-site and the subsequent assembly of the spliceosome. U1-C is directly involved in initial 5' splice-site recognition for both constitutive and regulated alternative splicing. The interaction with the 5' splice-site seems to precede base-pairing between the pre-mRNA and the U1 snRNA. Stimulates commitment or early (E) complex formation by stabilizing the base pairing of the 5' end of the U1 snRNA and the 5' splice-site region. This is U1 small nuclear ribonucleoprotein C from Drosophila pseudoobscura pseudoobscura (Fruit fly).